Here is a 404-residue protein sequence, read N- to C-terminus: MENEYKRLVLLEGLECINKHQFNLFKSLMVKDLNLEEDNQEKYTTFQIANMMVKKFPADAGLDRLINFCERVPTLKKRAEILKKERSEVTEETSLEINRQEASPATPTSTTSHMLASERGKTSTTQEETSTAQKRKGMSEEKTDVKKIKASGKADQPPCCEGPTATCQSPISQVSSSASSNIPSAKNQKSQPQNQNIPRGAVLHSEPLTVMVLTATDPFEYESPEHEVKNMFHATVATVSQYFHVKVFNIDLKEKFTKNNFITISNYFESKGILEINETSSVLEAAPKQMIEVPNCITRNANASPKICDIQKGTSGTVFYGVFTLHKKKVKTQNTSYEIKDGSGSIEVVGSGQWHNINCKEGDKLHLFCFHLKRERGQPKLVCGDHSFVKVTKAGKKKEASTVQ.

The region spanning 1–88 (MENEYKRLVL…AEILKKERSE (88 aa)) is the Pyrin domain. The tract at residues 85–198 (ERSEVTEETS…KSQPQNQNIP (114 aa)) is disordered. 2 stretches are compositionally biased toward low complexity: residues 102 to 112 (ASPATPTSTTS) and 122 to 132 (TSTTQEETSTA). Residues 137-147 (GMSEEKTDVKK) show a composition bias toward basic and acidic residues. Residues 168 to 185 (QSPISQVSSSASSNIPSA) show a composition bias toward low complexity. Polar residues predominate over residues 186–197 (KNQKSQPQNQNI). The region spanning 192 to 392 (PQNQNIPRGA…CGDHSFVKVT (201 aa)) is the HIN-200 domain.

The protein belongs to the HIN-200 family.

It localises to the nucleus. In terms of biological role, may act as a transcriptional regulator in the myeloid lineage. Inhibits cell growth via p53/TP53 and RB1-dependent and independent pathways. This Mus musculus (Mouse) protein is Interferon-activable protein 205-A (Ifi205a).